Here is an 896-residue protein sequence, read N- to C-terminus: Putative mannosylglycerate hydrolase (896 aa).

A divalent metal cation contacts are provided by H12, D14, D125, and H348. Residue D125 is the Nucleophile of the active site.

Belongs to the glycosyl hydrolase 38 family. Requires a divalent metal cation as cofactor.

The enzyme catalyses (2R)-2-O-(6-phospho-alpha-D-mannosyl)-glycerate + H2O = alpha-D-mannose 6-phosphate + (R)-glycerate. Functionally, may hydrolyze 6-phospho-mannosyl-D-glycerate to mannose-6-phosphate and glycerate. The polypeptide is Putative mannosylglycerate hydrolase (mngB) (Halalkalibacterium halodurans (strain ATCC BAA-125 / DSM 18197 / FERM 7344 / JCM 9153 / C-125) (Bacillus halodurans)).